Here is a 355-residue protein sequence, read N- to C-terminus: Uroporphyrinogen decarboxylase (355 aa).

Substrate is bound by residues 27–31 (RQAGR), Asp-77, Tyr-154, Thr-209, and His-327.

This sequence belongs to the uroporphyrinogen decarboxylase family. In terms of assembly, homodimer.

The protein resides in the cytoplasm. It catalyses the reaction uroporphyrinogen III + 4 H(+) = coproporphyrinogen III + 4 CO2. It participates in porphyrin-containing compound metabolism; protoporphyrin-IX biosynthesis; coproporphyrinogen-III from 5-aminolevulinate: step 4/4. Functionally, catalyzes the decarboxylation of four acetate groups of uroporphyrinogen-III to yield coproporphyrinogen-III. This chain is Uroporphyrinogen decarboxylase, found in Yersinia pestis bv. Antiqua (strain Antiqua).